Here is a 396-residue protein sequence, read N- to C-terminus: uncharacterized protein (396 aa).

The [4Fe-4S] cluster site is built by cysteine 8, cysteine 14, cysteine 17, and cysteine 95. The S-adenosyl-L-methionine site is built by glutamine 229, tyrosine 258, glutamate 279, and aspartate 325. Cysteine 352 acts as the Nucleophile in catalysis.

The protein belongs to the class I-like SAM-binding methyltransferase superfamily. RNA M5U methyltransferase family.

This is an uncharacterized protein from Chlamydia trachomatis serovar D (strain ATCC VR-885 / DSM 19411 / UW-3/Cx).